Consider the following 145-residue polypeptide: Histone H2B.10 (145 aa).

The span at 1 to 15 (MAKADKKPAEKKPAE) shows a compositional bias: basic and acidic residues. The interval 1–53 (MAKADKKPAEKKPAEKTPAAEPAAAAEKKPKAGKKLPKEPAGAGDKKKKRSKK) is disordered. The residue at position 3 (Lys3) is an N6-methyllysine. N6-acetyllysine occurs at positions 6 and 11. Lys12 carries the post-translational modification N6,N6-dimethyllysine. Residues Lys16, Lys28, and Lys34 each carry the N6-acetyllysine modification. Residues 16–25 (KTPAAEPAAA) show a composition bias toward low complexity. N6-acetyllysine; partial is present on Lys35. Residue Lys141 forms a Glycyl lysine isopeptide (Lys-Gly) (interchain with G-Cter in ubiquitin) linkage.

Belongs to the histone H2B family. The nucleosome is a histone octamer containing two molecules each of H2A, H2B, H3 and H4 assembled in one H3-H4 heterotetramer and two H2A-H2B heterodimers. The octamer wraps approximately 147 bp of DNA. Interacts with ORTH2. Post-translationally, can be acetylated to form H2BK5ac, H2BK10ac, H2BK15ac, H2BK27ac, H2BK33ac and H2BK34ac. In terms of processing, dimethylated to form H2BK11me2. Monoubiquitinated by BRE1 to form H2BK143ub1 and deubiquitinated by UBP26. Required for heterochromatic histone H3 di- and trimethylation at H3K4me. May give a specific tag for epigenetic transcriptional activation.

It localises to the nucleus. It is found in the chromosome. Its function is as follows. Core component of nucleosome. Nucleosomes wrap and compact DNA into chromatin, limiting DNA accessibility to the cellular machineries which require DNA as a template. Histones thereby play a central role in transcription regulation, DNA repair, DNA replication and chromosomal stability. DNA accessibility is regulated via a complex set of post-translational modifications of histones, also called histone code, and nucleosome remodeling. The polypeptide is Histone H2B.10 (Arabidopsis thaliana (Mouse-ear cress)).